Here is a 193-residue protein sequence, read N- to C-terminus: BH3-interacting domain death agonist (193 aa).

The short motif at Ile87 to Gln101 is the BH3 element.

Forms heterodimers either with the pro-apoptotic protein BAX or the anti-apoptotic protein Bcl-2.

Its subcellular location is the cytoplasm. It is found in the mitochondrion outer membrane. Functionally, induces caspases and apoptosis. Counters the protective effect of Bcl-2. The chain is BH3-interacting domain death agonist (BID) from Gallus gallus (Chicken).